The following is a 625-amino-acid chain: DNA-directed RNA polymerase subunit gamma (625 aa).

4 residues coordinate Zn(2+): C71, C73, C86, and C89. D467, D469, and D471 together coordinate Mg(2+).

This sequence belongs to the RNA polymerase beta' chain family. RpoC1 subfamily. In terms of assembly, in cyanobacteria the RNAP catalytic core is composed of 2 alpha, 1 beta, 1 beta', 1 gamma and 1 omega subunit. When a sigma factor is associated with the core the holoenzyme is formed, which can initiate transcription. It depends on Mg(2+) as a cofactor. Zn(2+) is required as a cofactor.

The enzyme catalyses RNA(n) + a ribonucleoside 5'-triphosphate = RNA(n+1) + diphosphate. DNA-dependent RNA polymerase catalyzes the transcription of DNA into RNA using the four ribonucleoside triphosphates as substrates. This Nostoc punctiforme (strain ATCC 29133 / PCC 73102) protein is DNA-directed RNA polymerase subunit gamma.